Consider the following 203-residue polypeptide: ADP-ribosylation factor-like protein 6-interacting protein 1 (203 aa).

Topologically, residues 1–41 (MAEGDNRSSNLLAVETASLEEQLQGWGEVMLMADKVLRWER) are cytoplasmic. The chain crosses the membrane as a helical span at residues 42-62 (AWFPPAIMGVVSLLFLIIYYL). The Lumenal segment spans residues 63–65 (DPS). The chain crosses the membrane as a helical span at residues 66–86 (VLSGVSCFVMFLCLADYLVPI). Over 87–133 (LAPRIFGSNKWTTEQQQRFHEICSNLVKTRRRAVGWWKRLFSLKEEK) the chain is Cytoplasmic. Residues 134–175 (PKMYFMTMIISLAAVAWVGQQVHNLLLTYLIVTFVLLLPGLN) form a helical membrane-spanning segment. The Lumenal segment spans residues 176–203 (QHGIILKYIGMAKREINKLLKQKEKKNE).

Belongs to the ARL6ip family. As to quaternary structure, homooligomer. Heterodimer with ARL6IP5. Interacts with ARL6. Interacts with TMEM33. Interacts with ATL1. In terms of tissue distribution, expressed in the cerebral cortex, cerebellum, hippocampus, olfactory bulbs, medulla oblongate and limbic system (at protein level). Ubiquitous. Expressed in all hematopoietic cell lineages, with highest levels in early myeloid progenitor cells.

It localises to the endomembrane system. It is found in the endoplasmic reticulum membrane. The protein resides in the endoplasmic reticulum. Positively regulates SLC1A1/EAAC1-mediated glutamate transport by increasing its affinity for glutamate in a PKC activity-dependent manner. Promotes the catalytic efficiency of SLC1A1/EAAC1 probably by reducing its interaction with ARL6IP5, a negative regulator of SLC1A1/EAAC1-mediated glutamate transport. Plays a role in the formation and stabilization of endoplasmic reticulum tubules. Negatively regulates apoptosis, possibly by modulating the activity of caspase-9 (CASP9). Inhibits cleavage of CASP9-dependent substrates and downstream markers of apoptosis but not CASP9 itself. May be involved in protein transport, membrane trafficking, or cell signaling during hematopoietic maturation. The protein is ADP-ribosylation factor-like protein 6-interacting protein 1 (Arl6ip1) of Mus musculus (Mouse).